We begin with the raw amino-acid sequence, 290 residues long: Elongation factor Ts (290 aa).

Residues 87–90 (TDFV) form an involved in Mg(2+) ion dislocation from EF-Tu region.

It belongs to the EF-Ts family.

It is found in the cytoplasm. Associates with the EF-Tu.GDP complex and induces the exchange of GDP to GTP. It remains bound to the aminoacyl-tRNA.EF-Tu.GTP complex up to the GTP hydrolysis stage on the ribosome. In Treponema pallidum (strain Nichols), this protein is Elongation factor Ts (tsf).